Here is a 426-residue protein sequence, read N- to C-terminus: Histidine--tRNA ligase (426 aa).

Belongs to the class-II aminoacyl-tRNA synthetase family. In terms of assembly, homodimer.

Its subcellular location is the cytoplasm. The catalysed reaction is tRNA(His) + L-histidine + ATP = L-histidyl-tRNA(His) + AMP + diphosphate + H(+). This chain is Histidine--tRNA ligase, found in Lactiplantibacillus plantarum (strain ATCC BAA-793 / NCIMB 8826 / WCFS1) (Lactobacillus plantarum).